Here is a 70-residue protein sequence, read N- to C-terminus: Conotoxin Cal6.11 (70 aa).

Positions Met1–Ala22 are cleaved as a signal peptide. A propeptide spanning residues Asp23–Ser43 is cleaved from the precursor. 3 disulfides stabilise this stretch: Cys46–Cys57, Cys50–Cys62, and Cys56–Cys69. 2 positions are modified to 4-hydroxyproline: Pro48 and Pro58. 4-carboxyglutamate is present on residues Glu60 and Glu67.

The protein belongs to the conotoxin O1 superfamily. As to expression, expressed by the venom duct.

The protein localises to the secreted. In terms of biological role, probable neurotoxin with unknown target. Possibly targets ion channels. The sequence is that of Conotoxin Cal6.11 from Californiconus californicus (California cone).